The following is a 179-amino-acid chain: ATP-dependent protease subunit HslV (179 aa).

Residue T7 is part of the active site. Na(+) is bound by residues G162, C165, and T168.

This sequence belongs to the peptidase T1B family. HslV subfamily. In terms of assembly, a double ring-shaped homohexamer of HslV is capped on each side by a ring-shaped HslU homohexamer. The assembly of the HslU/HslV complex is dependent on binding of ATP.

The protein localises to the cytoplasm. The catalysed reaction is ATP-dependent cleavage of peptide bonds with broad specificity.. Allosterically activated by HslU binding. Its function is as follows. Protease subunit of a proteasome-like degradation complex believed to be a general protein degrading machinery. In Saccharophagus degradans (strain 2-40 / ATCC 43961 / DSM 17024), this protein is ATP-dependent protease subunit HslV.